The chain runs to 100 residues: UPF0213 protein YhbQ (100 aa).

The 76-residue stretch at 2-77 folds into the GIY-YIG domain; that stretch reads TPWYLYLIRT…KQLTKRQKER (76 aa).

This sequence belongs to the UPF0213 family.

The protein is UPF0213 protein YhbQ of Escherichia coli O8 (strain IAI1).